We begin with the raw amino-acid sequence, 29 residues long: Cytochrome b6-f complex subunit 8 (29 aa).

The helical transmembrane segment at 3-23 threads the bilayer; it reads IDVLGWVALLVVFTWSIAMVV.

This sequence belongs to the PetN family. The 4 large subunits of the cytochrome b6-f complex are cytochrome b6, subunit IV (17 kDa polypeptide, PetD), cytochrome f and the Rieske protein, while the 4 small subunits are PetG, PetL, PetM and PetN. The complex functions as a dimer.

The protein resides in the cellular thylakoid membrane. In terms of biological role, component of the cytochrome b6-f complex, which mediates electron transfer between photosystem II (PSII) and photosystem I (PSI), cyclic electron flow around PSI, and state transitions. This Mastigocladus laminosus (Fischerella sp.) protein is Cytochrome b6-f complex subunit 8.